The following is a 132-amino-acid chain: Small ribosomal subunit protein uS8 (132 aa).

It belongs to the universal ribosomal protein uS8 family. In terms of assembly, part of the 30S ribosomal subunit. Contacts proteins S5 and S12.

In terms of biological role, one of the primary rRNA binding proteins, it binds directly to 16S rRNA central domain where it helps coordinate assembly of the platform of the 30S subunit. This Mycobacterium avium (strain 104) protein is Small ribosomal subunit protein uS8.